Consider the following 803-residue polypeptide: Phenylalanine--tRNA ligase beta subunit (803 aa).

Positions 40 to 153 (ASLDRRIVVG…SSWEIGKPFA (114 aa)) constitute a tRNA-binding domain. The 77-residue stretch at 400–476 (ADLQLLALRP…RLYGYNAIES (77 aa)) folds into the B5 domain. 4 residues coordinate Mg(2+): Asp-454, Asp-460, Glu-463, and Glu-464. Positions 709–801 (SRFPVVERDI…AESKLGAVIR (93 aa)) constitute an FDX-ACB domain.

It belongs to the phenylalanyl-tRNA synthetase beta subunit family. Type 1 subfamily. Tetramer of two alpha and two beta subunits. Requires Mg(2+) as cofactor.

The protein localises to the cytoplasm. It carries out the reaction tRNA(Phe) + L-phenylalanine + ATP = L-phenylalanyl-tRNA(Phe) + AMP + diphosphate + H(+). The chain is Phenylalanine--tRNA ligase beta subunit from Chlorobium chlorochromatii (strain CaD3).